Consider the following 267-residue polypeptide: Orotidine 5'-phosphate decarboxylase (267 aa).

Residues Asp-37, 59–61 (KTH), 91–100 (DRKFADIGNT), Tyr-217, and Arg-235 each bind substrate. Catalysis depends on Lys-93, which acts as the Proton donor.

It belongs to the OMP decarboxylase family.

The catalysed reaction is orotidine 5'-phosphate + H(+) = UMP + CO2. Its pathway is pyrimidine metabolism; UMP biosynthesis via de novo pathway; UMP from orotate: step 2/2. The polypeptide is Orotidine 5'-phosphate decarboxylase (URA3) (Eremothecium gossypii (strain ATCC 10895 / CBS 109.51 / FGSC 9923 / NRRL Y-1056) (Yeast)).